We begin with the raw amino-acid sequence, 1593 residues long: ABC transporter C family member 8 (1593 aa).

10 helical membrane-spanning segments follow: residues 27–47 (VVMTLPAIYLLIFGMKRLYYL), 75–95 (VIVSILLVAWKILFFIVIVSI), 100–120 (FEILYSVVTVVQWTVSLGLVY), 135–155 (LYWVFAFFVATVKLRTLTLAI), 169–189 (FSYFVGYCLILILSITSVLFF), 280–300 (FYIAALFKIIQDLLIFVGPTL), 318–338 (YDGLIYALLYFLAPVVQSLLL), 392–412 (LCPYLHMIWSAPLQLAISLVL), 419–439 (ASVFAGLGIMLVMIPINLAIS), and 505–525 (LLLWSMSPVFVSVSTFTVYIL). In terms of domain architecture, ABC transmembrane type-1 1 spans 280-561 (FYIAALFKII…LPSVVSSIIE (282 aa)). The 225-residue stretch at 594-818 (VKIDNATLEW…GSHFTELMSH (225 aa)) folds into the ABC transporter 1 domain. ATP is bound at residue 627–634 (GQVGSGKS). The disordered stretch occupies residues 816 to 938 (MSHDEQQQQL…PLQKGEKSSV (123 aa)). Residues 844–875 (GDNKESENNEEQNEEEEGENENLLEKVLRKSR) adopt a coiled-coil conformation. The span at 851 to 865 (NNEEQNEEEEGENEN) shows a compositional bias: acidic residues. The span at 877–886 (RSPSPSSNRN) shows a compositional bias: low complexity. Over residues 905–922 (EEDEQDERELMEDIDIDG) the composition is skewed to acidic residues. The next 5 membrane-spanning stretches (helical) occupy residues 1005 to 1025 (IGVLLATCIIGFYVLTQLLSI), 1064 to 1084 (AKYYLSIYVAFSCGTIAATFL), 1157 to 1177 (IIVIAWVSPFIILAMVPVGAL), 1251 to 1271 (LAIRLEFLGACLVSCAVLYTV), and 1280 to 1300 (GTAGLVITYALAITGNMNWMV). Positions 1010–1308 (ATCIIGFYVL…MVRMSCDLEN (299 aa)) constitute an ABC transmembrane type-1 2 domain. The region spanning 1344-1578 (IVFKNLWLTY…QDSIYYSLVK (235 aa)) is the ABC transporter 2 domain. ATP is bound at residue 1378–1385 (GRTGAGKS).

The protein belongs to the ABC transporter superfamily. ABCC family. Conjugate transporter (TC 3.A.1.208) subfamily.

It localises to the membrane. This chain is ABC transporter C family member 8 (abcC8), found in Dictyostelium discoideum (Social amoeba).